The following is a 614-amino-acid chain: Acetylcholinesterase (614 aa).

The signal sequence occupies residues 1–31 (MRPPQCLLHTPSLASPLLLLLLWLLGGGVGA). Cys100 and Cys127 are disulfide-bonded. Trp117 is a binding site for galanthamine. Trp117 is a binding site for huperzine A. Position 153 (Gly153) interacts with huprine W. Residue Tyr164 participates in huperzine A binding. Position 233 to 234 (233 to 234 (ES)) interacts with galanthamine. Ser234 contacts huprine W. Ser234 functions as the Acyl-ester intermediate in the catalytic mechanism. An intrachain disulfide couples Cys288 to Cys303. Residue Asn296 is glycosylated (N-linked (GlcNAc...) asparagine). The Charge relay system role is filled by Glu365. Residue Tyr368 participates in galanthamine binding. A huperzine A-binding site is contributed by Tyr368. Asn381 is a glycosylation site (N-linked (GlcNAc...) asparagine). Cys440 and Cys560 form a disulfide bridge. Positions 470 and 478 each coordinate huprine W. The Charge relay system role is filled by His478. N-linked (GlcNAc...) asparagine glycosylation occurs at Asn495. Phe588 carries GPI-anchor amidated glycine lipidation.

This sequence belongs to the type-B carboxylesterase/lipase family. As to quaternary structure, interacts with PRIMA1. The interaction with PRIMA1 is required to anchor it to the basal lamina of cells and organize into tetramers. Isoform H generates GPI-anchored dimers; disulfide linked. Isoform T generates multiple structures, ranging from monomers and dimers to collagen-tailed and hydrophobic-tailed forms, in which catalytic tetramers are associated with anchoring proteins that attach them to the basal lamina or to cell membranes. In the collagen-tailed forms, isoform T subunits are associated with a specific collagen, COLQ, which triggers the formation of isoform T tetramers, from monomers and dimers. Isoform R may be monomeric. In terms of tissue distribution, isoform H is highly expressed in erythrocytes.

It is found in the synapse. The protein localises to the secreted. The protein resides in the cell membrane. Its subcellular location is the nucleus. The catalysed reaction is acetylcholine + H2O = choline + acetate + H(+). Hydrolyzes rapidly the acetylcholine neurotransmitter released into the synaptic cleft allowing to terminate the signal transduction at the neuromuscular junction. Role in neuronal apoptosis. This is Acetylcholinesterase from Homo sapiens (Human).